The primary structure comprises 68 residues: Non-specific lipid-transfer protein 2 (68 aa).

Belongs to the plant LTP family.

Its function is as follows. Plant non-specific lipid-transfer proteins transfer phospholipids as well as galactolipids across membranes. May play a role in wax or cutin deposition in the cell walls of expanding epidermal cells and certain secretory tissues. This is Non-specific lipid-transfer protein 2 from Prunus armeniaca (Apricot).